Here is a 166-residue protein sequence, read N- to C-terminus: C-signal (166 aa).

Post-translationally, the mature C-signal (p17) is derived from the precursor sequence (p25) by proteolytic cleavage. The subtilisin-like protease PopC is directly responsible for cleavage of p25 to p17. The cleavage site is probably located between amino acid residues 60 and 68 in p25.

Its subcellular location is the secreted. The protein localises to the cell outer membrane. With respect to regulation, synthesized as a precursor protein (p25), which is cleaved after secretion to generate the mature active C-signal (p17). The p25 precursor purified from M.xanthus cells does not display C-signal activity. In terms of biological role, cell-cell signaling protein required for fruiting body formation, a multicellular developmental program that is induced in response to starvation. Necessary for rippling, cellular aggregation, spore differentiation and for gene expression that is initiated after 6 hours of starvation. In starving cells, the C-signal directly induces aggregation and sporulation, which are induced at distinct threshold levels of C-signaling. Contact with C-signaling induces cells to glide with high speed and low stop and reversal frequencies toward aggregation centers. The C-signal acts as a morphogen and induces distinct events at distinct threshold levels. A regulated increase in the level of C-signaling during development ensures the correct temporal order of aggregation and sporulation. The sequence is that of C-signal from Myxococcus xanthus.